A 2527-amino-acid chain; its full sequence is Highly reducing polyketide synthase poxF (2527 aa).

Residues 20–445 (VMPIAIIGMA…GANAHVIVES (426 aa)) enclose the Ketosynthase family 3 (KS3) domain. Catalysis depends on for beta-ketoacyl synthase activity residues C193, H328, and H368. A malonyl-CoA:ACP transacylase (MAT) domain region spans residues 560–882 (VFTGQGAQWF…TYASCLSRGQ (323 aa)). An N-terminal hotdog fold region spans residues 951 to 1086 (HDLLGVPAAG…GLCCTPSPAQ (136 aa)). The interval 951–1243 (HDLLGVPAAG…SVRVINNAGT (293 aa)) is dehydratase (DH) domain. Residues 951-1270 (HDLLGVPAAG…CQSLGSSAVV (320 aa)) form the PKS/mFAS DH domain. Residue H983 is the Proton acceptor; for dehydratase activity of the active site. Residues 1108 to 1270 (AWRILNPADT…CQSLGSSAVV (163 aa)) form a C-terminal hotdog fold region. Residue D1174 is the Proton donor; for dehydratase activity of the active site. Positions 1406-1587 (EDQAEWSSVS…RLLAKAGFEP (182 aa)) are methyltransferase (CMet) domain. Positions 1823 to 2137 (GLLNSLVFTE…TGKHMGKIVL (315 aa)) are enoyl reductase (ER) (ER) domain. Positions 2162 to 2339 (TYLLVGGVGG…AVSIDLGMVS (178 aa)) are ketoreductase (KR) domain. A Carrier domain is found at 2445-2522 (EVTTLIQSAL…GLAGQMAKKS (78 aa)). Position 2482 is an O-(pantetheine 4'-phosphoryl)serine (S2482).

Its pathway is secondary metabolite biosynthesis. Highly reducing polyketide synthase; part of the gene cluster that mediates the biosynthesis of oxaleimides, cytotoxic compounds containing an unusual disubstituted succinimide moiety. The first step of the pathway is provided by the HR-PKS poxF that serves in a new mode of collaborative biosynthesis with the PKS-NRPS poxE, by providing the olefin containing amino acid substrate via the synthesis of an ACP-bound dec-4-enoate. The cytochrome P450 monooxygenase poxM-catalyzed oxidation at the alpha-position creates the enzyme-bound 2-hydroxydec-4-enoyl-ACP thioester, which may be prone to spontaneous hydrolysis to yield 2-hydroxydec-4-enoic acid due to increased electrophilicity of the carbonyl. 2-hydroxydec-4-enoic acid can then be further oxidized by poxM to yield the alpha-ketoacid 2-oxodec-4-enoicacid, which is reductively aminated by the aminotransferase poxL to yield (S,E)-2-aminodec-4-enoic acid. The Hybrid PKS-NRPS synthetase poxE then performs condensation between the octaketide product of its PKS modules and the amino group of (S,E)-2-aminodec-4-enoic acid which is activated and incorporated by the adenylation domain. The resulting aminoacyl product can be cyclized by the Diels-Alderase PoxQ and reductively released by the reductive (R) domain of poxE to yield an aldehyde intermediate. The released aldehyde is then substrate for a Knoevenagel condensation by the hydrolyase poxO followed by an oxidation at the 5-position of the pyrrolidone ring. The presence of the olefin from the amino acid building block allows for migration of the substituted allyl group to occur. This allylic transposition reaction takes place in a conjugate addition, semipinacol-like fashion to yield a succinimide intermediate. Iterative two-electron oxidations of the C7 methyl of the succinimide intermediate to the carboxylic acid can be catalyzed by one of two remaining cytochrome P450 monooxygenasess poxC or poxD to yield oxaleimide A. Subsequent oxidation yields the maleimide scaffold oxaleimide I. Both oxaleimide A and oxaleimide I can undergo oxidative modifications in the decalin ring to yield the series of products oxaleimides B to H. The polypeptide is Highly reducing polyketide synthase poxF (Penicillium oxalicum).